Reading from the N-terminus, the 388-residue chain is Succinate--CoA ligase [ADP-forming] subunit beta (388 aa).

The 236-residue stretch at 9–244 folds into the ATP-grasp domain; that stretch reads KALFAEYGLP…PSQDDAREAH (236 aa). Residues Lys46, 53-55, Glu99, Thr102, and Glu107 contribute to the ATP site; that span reads GRG. Residues Asn199 and Asp213 each coordinate Mg(2+). Residues Asn264 and 321-323 each bind substrate; that span reads GIV.

The protein belongs to the succinate/malate CoA ligase beta subunit family. As to quaternary structure, heterotetramer of two alpha and two beta subunits. It depends on Mg(2+) as a cofactor.

The catalysed reaction is succinate + ATP + CoA = succinyl-CoA + ADP + phosphate. It catalyses the reaction GTP + succinate + CoA = succinyl-CoA + GDP + phosphate. It functions in the pathway carbohydrate metabolism; tricarboxylic acid cycle; succinate from succinyl-CoA (ligase route): step 1/1. Functionally, succinyl-CoA synthetase functions in the citric acid cycle (TCA), coupling the hydrolysis of succinyl-CoA to the synthesis of either ATP or GTP and thus represents the only step of substrate-level phosphorylation in the TCA. The beta subunit provides nucleotide specificity of the enzyme and binds the substrate succinate, while the binding sites for coenzyme A and phosphate are found in the alpha subunit. The polypeptide is Succinate--CoA ligase [ADP-forming] subunit beta (Shewanella amazonensis (strain ATCC BAA-1098 / SB2B)).